Consider the following 285-residue polypeptide: Bifunctional protein FolD (285 aa).

NADP(+) is bound by residues Gly-165–Ser-167 and Ser-190.

It belongs to the tetrahydrofolate dehydrogenase/cyclohydrolase family. Homodimer.

It carries out the reaction (6R)-5,10-methylene-5,6,7,8-tetrahydrofolate + NADP(+) = (6R)-5,10-methenyltetrahydrofolate + NADPH. It catalyses the reaction (6R)-5,10-methenyltetrahydrofolate + H2O = (6R)-10-formyltetrahydrofolate + H(+). The protein operates within one-carbon metabolism; tetrahydrofolate interconversion. Its function is as follows. Catalyzes the oxidation of 5,10-methylenetetrahydrofolate to 5,10-methenyltetrahydrofolate and then the hydrolysis of 5,10-methenyltetrahydrofolate to 10-formyltetrahydrofolate. The sequence is that of Bifunctional protein FolD from Staphylococcus haemolyticus (strain JCSC1435).